A 153-amino-acid chain; its full sequence is Endoribonuclease YbeY (153 aa).

3 residues coordinate Zn(2+): histidine 114, histidine 118, and histidine 124.

The protein belongs to the endoribonuclease YbeY family. Zn(2+) serves as cofactor.

The protein localises to the cytoplasm. Its function is as follows. Single strand-specific metallo-endoribonuclease involved in late-stage 70S ribosome quality control and in maturation of the 3' terminus of the 16S rRNA. The sequence is that of Endoribonuclease YbeY from Shewanella denitrificans (strain OS217 / ATCC BAA-1090 / DSM 15013).